Here is a 188-residue protein sequence, read N- to C-terminus: Putative lipoprotein LprB (188 aa).

Positions 1 to 27 (MRCDVRALALAARGLIELMIVIPMVAG) are cleaved as a signal peptide. Cys28 carries N-palmitoyl cysteine lipidation. Cys28 carries the S-diacylglycerol cysteine lipid modification.

The protein resides in the cell membrane. In Mycobacterium leprae (strain TN), this protein is Putative lipoprotein LprB (lprB).